A 250-amino-acid chain; its full sequence is 2,3-bisphosphoglycerate-dependent phosphoglycerate mutase (250 aa).

Substrate-binding positions include 10 to 17 (RHGESQWN), 23 to 24 (TG), R62, 89 to 92 (ERHY), K100, 116 to 117 (RR), and 185 to 186 (GN). H11 serves as the catalytic Tele-phosphohistidine intermediate. Residue E89 is the Proton donor/acceptor of the active site.

This sequence belongs to the phosphoglycerate mutase family. BPG-dependent PGAM subfamily. In terms of assembly, homodimer.

It catalyses the reaction (2R)-2-phosphoglycerate = (2R)-3-phosphoglycerate. It participates in carbohydrate degradation; glycolysis; pyruvate from D-glyceraldehyde 3-phosphate: step 3/5. In terms of biological role, catalyzes the interconversion of 2-phosphoglycerate and 3-phosphoglycerate. The polypeptide is 2,3-bisphosphoglycerate-dependent phosphoglycerate mutase (Yersinia enterocolitica serotype O:8 / biotype 1B (strain NCTC 13174 / 8081)).